Reading from the N-terminus, the 258-residue chain is Acyl-[acyl-carrier-protein]--UDP-N-acetylglucosamine O-acyltransferase (258 aa).

This sequence belongs to the transferase hexapeptide repeat family. LpxA subfamily. As to quaternary structure, homotrimer.

Its subcellular location is the cytoplasm. It carries out the reaction a (3R)-hydroxyacyl-[ACP] + UDP-N-acetyl-alpha-D-glucosamine = a UDP-3-O-[(3R)-3-hydroxyacyl]-N-acetyl-alpha-D-glucosamine + holo-[ACP]. It functions in the pathway glycolipid biosynthesis; lipid IV(A) biosynthesis; lipid IV(A) from (3R)-3-hydroxytetradecanoyl-[acyl-carrier-protein] and UDP-N-acetyl-alpha-D-glucosamine: step 1/6. Functionally, involved in the biosynthesis of lipid A, a phosphorylated glycolipid that anchors the lipopolysaccharide to the outer membrane of the cell. The polypeptide is Acyl-[acyl-carrier-protein]--UDP-N-acetylglucosamine O-acyltransferase (Pseudomonas fluorescens (strain Pf0-1)).